A 254-amino-acid polypeptide reads, in one-letter code: Ubiquinone/menaquinone biosynthesis C-methyltransferase UbiE (254 aa).

S-adenosyl-L-methionine is bound by residues Thr77, Asp98, Asn126–Ala127, and Ser143.

This sequence belongs to the class I-like SAM-binding methyltransferase superfamily. MenG/UbiE family.

It carries out the reaction a 2-demethylmenaquinol + S-adenosyl-L-methionine = a menaquinol + S-adenosyl-L-homocysteine + H(+). The catalysed reaction is a 2-methoxy-6-(all-trans-polyprenyl)benzene-1,4-diol + S-adenosyl-L-methionine = a 5-methoxy-2-methyl-3-(all-trans-polyprenyl)benzene-1,4-diol + S-adenosyl-L-homocysteine + H(+). It participates in quinol/quinone metabolism; menaquinone biosynthesis; menaquinol from 1,4-dihydroxy-2-naphthoate: step 2/2. The protein operates within cofactor biosynthesis; ubiquinone biosynthesis. Methyltransferase required for the conversion of demethylmenaquinol (DMKH2) to menaquinol (MKH2) and the conversion of 2-polyprenyl-6-methoxy-1,4-benzoquinol (DDMQH2) to 2-polyprenyl-3-methyl-6-methoxy-1,4-benzoquinol (DMQH2). This Blochmanniella floridana protein is Ubiquinone/menaquinone biosynthesis C-methyltransferase UbiE.